The sequence spans 244 residues: Small ribosomal subunit protein eS4 (244 aa).

The region spanning 43 to 108 (LPLLLIVRDI…NYRVLFDRKG (66 aa)) is the S4 RNA-binding domain.

Belongs to the eukaryotic ribosomal protein eS4 family.

This chain is Small ribosomal subunit protein eS4 (rps4e), found in Methanocaldococcus jannaschii (strain ATCC 43067 / DSM 2661 / JAL-1 / JCM 10045 / NBRC 100440) (Methanococcus jannaschii).